The following is a 217-amino-acid chain: MPPADHPPPEKMMFQLNLRRRGISDQRVLRAMDNVPRDAFVEQGDREDAWCDTALGIACGQTISQPFVVAYMTERLELGDDQRVLEIGTGSGYQTAILSRLCREVVTVERYRVLADRARARLKHLGYDNVEVLLGDGFDIPGEAGRFDRIMVTAAMEQIPEALTARLEPDGLLIAPVGPQSGRQTLILLRRAPAGMIRKELIDVRFVPALPGIAREL.

Residue Ser-64 is part of the active site.

It belongs to the methyltransferase superfamily. L-isoaspartyl/D-aspartyl protein methyltransferase family.

The protein resides in the cytoplasm. The catalysed reaction is [protein]-L-isoaspartate + S-adenosyl-L-methionine = [protein]-L-isoaspartate alpha-methyl ester + S-adenosyl-L-homocysteine. In terms of biological role, catalyzes the methyl esterification of L-isoaspartyl residues in peptides and proteins that result from spontaneous decomposition of normal L-aspartyl and L-asparaginyl residues. It plays a role in the repair and/or degradation of damaged proteins. This is Protein-L-isoaspartate O-methyltransferase from Nitrobacter winogradskyi (strain ATCC 25391 / DSM 10237 / CIP 104748 / NCIMB 11846 / Nb-255).